Reading from the N-terminus, the 397-residue chain is Subtilisin-like serine protease Pen ch 13.0101 (397 aa).

The signal sequence occupies residues 1 to 19; that stretch reads MGFLKVLATSLATLAVVDA. Positions 20-115 are cleaved as a propeptide — removed in mature form; it reads GTLLTASNTD…IEPDMIVNAT (96 aa). An Inhibitor I9 domain is found at 35–113; that stretch reads SYIVVMNDDV…KYIEPDMIVN (79 aa). Residue N113 is glycosylated (N-linked (GlcNAc...) asparagine). Residues 125 to 397 enclose the Peptidase S8 domain; it reads SWGLARISSK…SKLLYNGINV (273 aa). Active-site charge relay system residues include D157 and H188. N-linked (GlcNAc...) asparagine glycosylation is found at N249 and N284. S343 functions as the Charge relay system in the catalytic mechanism.

Belongs to the peptidase S8 family.

The protein localises to the secreted. In terms of biological role, serine protease. The protein is Subtilisin-like serine protease Pen ch 13.0101 of Penicillium rubens.